Reading from the N-terminus, the 135-residue chain is Small ribosomal subunit protein bS16 (135 aa).

The segment at 82 to 135 (RPAETVGKAKQAAKREADAKQAAKEAAEAKAAAADEKAAEAEASDSAESESTEG) is disordered. The segment covering 94 to 121 (AKREADAKQAAKEAAEAKAAAADEKAAE) has biased composition (basic and acidic residues). Acidic residues predominate over residues 123-135 (EASDSAESESTEG).

Belongs to the bacterial ribosomal protein bS16 family.

This is Small ribosomal subunit protein bS16 from Synechococcus sp. (strain CC9605).